A 281-amino-acid polypeptide reads, in one-letter code: Pantothenate synthetase (281 aa).

30-37 (MGYLHEGH) provides a ligand contact to ATP. Catalysis depends on His-37, which acts as the Proton donor. Residue Gln-61 participates in (R)-pantoate binding. Gln-61 provides a ligand contact to beta-alanine. 147 to 150 (GEKD) serves as a coordination point for ATP. Gln-153 provides a ligand contact to (R)-pantoate. ATP contacts are provided by residues Ile-176 and 184-187 (KSSR).

The protein belongs to the pantothenate synthetase family. In terms of assembly, homodimer.

The protein resides in the cytoplasm. It catalyses the reaction (R)-pantoate + beta-alanine + ATP = (R)-pantothenate + AMP + diphosphate + H(+). The protein operates within cofactor biosynthesis; (R)-pantothenate biosynthesis; (R)-pantothenate from (R)-pantoate and beta-alanine: step 1/1. In terms of biological role, catalyzes the condensation of pantoate with beta-alanine in an ATP-dependent reaction via a pantoyl-adenylate intermediate. This chain is Pantothenate synthetase, found in Clostridium botulinum (strain 657 / Type Ba4).